A 120-amino-acid polypeptide reads, in one-letter code: NAD(P)H-quinone oxidoreductase subunit 3 (120 aa).

Helical transmembrane passes span 7–27 (YEYV…ALTA), 64–84 (MFAL…PWAV), and 89–109 (LGLL…VALV).

The protein belongs to the complex I subunit 3 family. As to quaternary structure, NDH-1 can be composed of about 15 different subunits; different subcomplexes with different compositions have been identified which probably have different functions.

It localises to the cellular thylakoid membrane. The catalysed reaction is a plastoquinone + NADH + (n+1) H(+)(in) = a plastoquinol + NAD(+) + n H(+)(out). It catalyses the reaction a plastoquinone + NADPH + (n+1) H(+)(in) = a plastoquinol + NADP(+) + n H(+)(out). Functionally, NDH-1 shuttles electrons from an unknown electron donor, via FMN and iron-sulfur (Fe-S) centers, to quinones in the respiratory and/or the photosynthetic chain. The immediate electron acceptor for the enzyme in this species is believed to be plastoquinone. Couples the redox reaction to proton translocation, and thus conserves the redox energy in a proton gradient. Cyanobacterial NDH-1 also plays a role in inorganic carbon-concentration. This Crocosphaera subtropica (strain ATCC 51142 / BH68) (Cyanothece sp. (strain ATCC 51142)) protein is NAD(P)H-quinone oxidoreductase subunit 3.